The chain runs to 425 residues: Riboflavin biosynthesis protein RibBA (425 aa).

Residues 1–204 (MTRLDSVERA…IADLIEWRRK (204 aa)) are DHBP synthase. D-ribulose 5-phosphate is bound by residues 28-29 (RE), aspartate 33, 141-145 (RPGHT), and glutamate 165. Residue glutamate 29 participates in Mg(2+) binding. Residue histidine 144 coordinates Mg(2+). The GTP cyclohydrolase II stretch occupies residues 205 to 425 (HEKHIERVAE…HLPGEFGGAL (221 aa)). A GTP-binding site is contributed by 259–263 (RVHSE). 3 residues coordinate Zn(2+): cysteine 264, cysteine 275, and cysteine 277. GTP is bound by residues glutamine 280, 303 to 305 (EGR), and threonine 325. The Proton acceptor; for GTP cyclohydrolase activity role is filled by aspartate 337. Arginine 339 serves as the catalytic Nucleophile; for GTP cyclohydrolase activity. 2 residues coordinate GTP: threonine 360 and lysine 365.

This sequence in the N-terminal section; belongs to the DHBP synthase family. The protein in the C-terminal section; belongs to the GTP cyclohydrolase II family. Mg(2+) is required as a cofactor. Mn(2+) serves as cofactor. Requires Zn(2+) as cofactor.

The catalysed reaction is D-ribulose 5-phosphate = (2S)-2-hydroxy-3-oxobutyl phosphate + formate + H(+). It carries out the reaction GTP + 4 H2O = 2,5-diamino-6-hydroxy-4-(5-phosphoribosylamino)-pyrimidine + formate + 2 phosphate + 3 H(+). Its pathway is cofactor biosynthesis; riboflavin biosynthesis; 2-hydroxy-3-oxobutyl phosphate from D-ribulose 5-phosphate: step 1/1. It functions in the pathway cofactor biosynthesis; riboflavin biosynthesis; 5-amino-6-(D-ribitylamino)uracil from GTP: step 1/4. Catalyzes the conversion of D-ribulose 5-phosphate to formate and 3,4-dihydroxy-2-butanone 4-phosphate. Its function is as follows. Catalyzes the conversion of GTP to 2,5-diamino-6-ribosylamino-4(3H)-pyrimidinone 5'-phosphate (DARP), formate and pyrophosphate. This chain is Riboflavin biosynthesis protein RibBA, found in Mycobacterium ulcerans (strain Agy99).